The chain runs to 201 residues: Recombination protein RecR (201 aa).

The C4-type zinc finger occupies 57–72; the sequence is CRDCRTFTEQEVCTIC. Positions 81–176 constitute a Toprim domain; sequence GQICVVESPA…LASRIAHGVP (96 aa).

The protein belongs to the RecR family.

Functionally, may play a role in DNA repair. It seems to be involved in an RecBC-independent recombinational process of DNA repair. It may act with RecF and RecO. This chain is Recombination protein RecR, found in Edwardsiella ictaluri (strain 93-146).